The primary structure comprises 591 residues: Aspartate--tRNA(Asp/Asn) ligase (591 aa).

Residue Glu175 coordinates L-aspartate. Residues 199-202 are aspartate; sequence QQFK. L-aspartate contacts are provided by Arg221 and His453. 221–223 provides a ligand contact to ATP; that stretch reads RDE. Glu486 serves as a coordination point for ATP. Arg493 contacts L-aspartate. Residue 538–541 participates in ATP binding; that stretch reads GIDR.

This sequence belongs to the class-II aminoacyl-tRNA synthetase family. Type 1 subfamily. Homodimer.

It is found in the cytoplasm. The catalysed reaction is tRNA(Asx) + L-aspartate + ATP = L-aspartyl-tRNA(Asx) + AMP + diphosphate. In terms of biological role, aspartyl-tRNA synthetase with relaxed tRNA specificity since it is able to aspartylate not only its cognate tRNA(Asp) but also tRNA(Asn). Reaction proceeds in two steps: L-aspartate is first activated by ATP to form Asp-AMP and then transferred to the acceptor end of tRNA(Asp/Asn). The polypeptide is Aspartate--tRNA(Asp/Asn) ligase (Cereibacter sphaeroides (strain ATCC 17025 / ATH 2.4.3) (Rhodobacter sphaeroides)).